The primary structure comprises 627 residues: uncharacterized protein (627 aa).

A WH1 domain is found at 21–136; sequence GISASDKILS…NSVCKRQTRS (116 aa). A disordered region spans residues 310–347; sequence RGSLSTPRIPTHRDSYRSATKPDTVPKQTPPPTHNSYV.

This is an uncharacterized protein from Caenorhabditis elegans.